We begin with the raw amino-acid sequence, 364 residues long: Transcription factor SPEECHLESS (364 aa).

Positions 35–109 are disordered; that stretch reads GEISPTAAST…QKMSHVTVER (75 aa). Residue Ser-38 is modified to Phosphoserine; by ASK7. Residue Thr-40 is modified to Phosphothreonine; by ASK7. Over residues 40 to 53 the composition is skewed to polar residues; the sequence is TAASTPKDGTTSSK. Ser-43 carries the phosphoserine; by ASK7 modification. Thr-44 is modified (phosphothreonine; by ASK7). A Phosphoserine; by ASK7 modification is found at Ser-65. A compositionally biased stretch (acidic residues) spans 79-92; sequence EDEEEEDGDGEAEE. Residues 99 to 112 form a basic motif region; sequence QQKMSHVTVERNRR. Positions 99–150 constitute a bHLH domain; that stretch reads QQKMSHVTVERNRRKQMNEHLTVLRSLMPCFYVKRGDQASIIGGVVEYISEL. The helix-loop-helix motif stretch occupies residues 113–150; sequence KQMNEHLTVLRSLMPCFYVKRGDQASIIGGVVEYISEL. At Ser-171 the chain carries Phosphoserine; by ASK7. Residues 171-227 are disordered; that stretch reads SPRVVPSPRPSPPVLSPRKPPLSPRINHHQIHHHLLLPPISPRTPQPTSPYRAIPPQ. The span at 175 to 193 shows a compositional bias: pro residues; sequence VPSPRPSPPVLSPRKPPLS. A Phosphoserine; by ASK7, MPK3 and MPK6 modification is found at Ser-177. A Phosphoserine; by ASK7 modification is found at Ser-181. Ser-186 bears the Phosphoserine; by CDKA-1, ASK7, MPK3 and MPK6 mark. At Ser-193 the chain carries Phosphoserine; by MPK3 and MPK6. Positions 196 to 205 are enriched in basic residues; the sequence is INHHQIHHHL. A compositionally biased stretch (pro residues) spans 209–218; the sequence is PISPRTPQPT. Residue Ser-211 is modified to Phosphoserine; by MPK3 and MPK6. Thr-214 is subject to Phosphothreonine; by ASK7, MPK3 and MPK6. A Phosphoserine; by ASK7, MPK3 and MPK6 modification is found at Ser-219.

Homodimer. Forms dimers with SCRM and SCRM2. May interact with CDKA-1. Post-translationally, phosphorylated by ASK7/BIN2 and ASK3/SK12; this post-translational modification inhibits activity and limit epidermal cell proliferation. Phosphorylation by MPK3 and MPK6 leads to the inhibition of stomatal fate and to degradation. Stabilized by CDKA-1-mediated phosphorylation at Ser-186 which promotes stomatal development. In terms of tissue distribution, expressed in developing leaf epidermis. Reduced accumulation in the stomatal lineage ground cells (SLGCs) where BASL is polarized in the cell cortex. Observed in small cells of non-protruding hypocotyl cell files and of developing cotyledon epidermis. Restricted to meristemoids (stomatal precursor cell) in leaves epidermis, mostly in dividing cells of non-protruding cell files.

The protein localises to the nucleus. Negatively regulated through phosphorylation by the MAPK module. Activity is constrained by polarized BASL in stomatal lineage ground cells (SLGCs) undergoing ACD. In terms of biological role, transcription factor acting as an integration node for stomata and brassinosteroid (BR) signaling pathways to control stomatal initiation and development. Activates transcription when in the presence of SCRM/ICE1. Functions as a dimer with SCRM or SCRM2 during stomatal initiation. Required for the initiation, the spacing and the formation of stomata, by promoting the first asymmetric cell divisions. Together with FMA and MUTE, modulates the stomata formation. Involved in the regulation of growth reduction under osmotic stress (e.g. mannitol), associated with a quick decrease of meristemoid mother cells (MMCs) number lower stomatal index and density. This is Transcription factor SPEECHLESS from Arabidopsis thaliana (Mouse-ear cress).